A 471-amino-acid chain; its full sequence is ATP synthase subunit beta (471 aa).

153–160 (GGAGVGKT) lines the ATP pocket.

Belongs to the ATPase alpha/beta chains family. F-type ATPases have 2 components, CF(1) - the catalytic core - and CF(0) - the membrane proton channel. CF(1) has five subunits: alpha(3), beta(3), gamma(1), delta(1), epsilon(1). CF(0) has three main subunits: a(1), b(2) and c(9-12). The alpha and beta chains form an alternating ring which encloses part of the gamma chain. CF(1) is attached to CF(0) by a central stalk formed by the gamma and epsilon chains, while a peripheral stalk is formed by the delta and b chains.

It localises to the cell inner membrane. The enzyme catalyses ATP + H2O + 4 H(+)(in) = ADP + phosphate + 5 H(+)(out). Its function is as follows. Produces ATP from ADP in the presence of a proton gradient across the membrane. The catalytic sites are hosted primarily by the beta subunits. The sequence is that of ATP synthase subunit beta from Verminephrobacter eiseniae (strain EF01-2).